Here is a 616-residue protein sequence, read N- to C-terminus: MSDLYIHELGDYLSDEFHGNDDGIVPDSAYEDGGQFPILVSNRKKRRNDDMGSGTNHLKSNTFIKREANMLGKNPWPEKDSGGSSVSRDTGTGKDVQDMTLEDTNTSDHGFNGGHVDVVENFSTGDPMLCDTSAATNDGVYNYSLNSIPDAENDLSFFDNGDKEKNDLFYGWGDIGNFEDVDNMLRSCDSTFGLDSLNNEGDLGWFSSAQPNEETAGAMTDDLKPDKMLENQRTAMLQVEDFLNNSEPNHAVEDEYGYTIEDDSAQGKSSQNVFDTSLQKKDILMLDVEANLEKKQTDHLHHLDGKSDGFSENSFTLQHSGISREIMDTNQYYPPSAFQQRDVPYSHFNCEQPSVQVSACESKSGIKSENKPSPSSASNESYTSNHAQSIESLQGPTVDDRFRKVFETRANLLPGQDMPPSFAANTKKSSKTDSMVFPDAAPIQKIGLENDHRKAATELETSNMQGSSCVSSVVDDISLEATSFRQLQQVIEQLDVRTKLCIRDSLYRLAKSAEQRHHGGNRPEKGAGSHLVTGEADKYAGFMDIETDTNPIDRSIAHLLFHRPSDSSLSSDNNVLSYKSHPMIPQPNSSPSLRIEKQEETTELRPEAEVVTSDNN.

4 disordered regions span residues 72-112 (GKNP…HGFN), 361-398 (ESKS…GPTV), 410-434 (ANLL…KTDS), and 567-616 (SSLS…SDNN). A compositionally biased stretch (polar residues) spans 371–395 (KPSPSSASNESYTSNHAQSIESLQG). Residues 567–577 (SSLSSDNNVLS) are compositionally biased toward low complexity. The segment covering 594–608 (RIEKQEETTELRPEA) has biased composition (basic and acidic residues).

In terms of assembly, interacts with CCA1, LHY, REV4 and REV8, but not with PRR7 or PRR9. Expressed in roots, stems, leaves, seedlings, cotyledons, inflorescences and siliques. Highest expression in root tips, young leaves and vasculatur tissues.

Its subcellular location is the nucleus. In terms of biological role, transcriptional coactivator necessary for expression of the clock genes PRR5 and TOC1. Antagonizes REV8 function in the regulation of anthocyanin accumulation. Involved in red light input to the clock. Activates clock-controlled genes with afternoon peak. Mediates light inhibition of hypocotyl elongation. The chain is Protein LNK1 from Arabidopsis thaliana (Mouse-ear cress).